The following is a 237-amino-acid chain: AA9 family lytic polysaccharide monooxygenase C (237 aa).

An N-terminal signal peptide occupies residues 1-15; sequence MKVLAPLILAGAASA. Positions 16 and 99 each coordinate Cu(2+). Disulfide bonds link cysteine 54-cysteine 185 and cysteine 155-cysteine 237. Asparagine 112 is a glycosylation site (N-linked (GlcNAc...) asparagine). O2 contacts are provided by histidine 171 and glutamine 180. Tyrosine 182 contributes to the Cu(2+) binding site.

The protein belongs to the polysaccharide monooxygenase AA9 family. It depends on Cu(2+) as a cofactor.

The protein localises to the secreted. It catalyses the reaction [(1-&gt;4)-beta-D-glucosyl]n+m + reduced acceptor + O2 = 4-dehydro-beta-D-glucosyl-[(1-&gt;4)-beta-D-glucosyl]n-1 + [(1-&gt;4)-beta-D-glucosyl]m + acceptor + H2O.. Is able to utilize various natural phenolic compounds as reducing agents. Most of these reducing agents are present in plants, either free or as lignin building blocks, such as sinapic acid, or as flavonoids such as catechin and dopamine. Phenolic compounds with 1,2-benzenediol and 1,2,3-benzenetriol moieties yield the highest release of oxidized and non-oxidized glucooligosaccharides from cellulose compared to monophenols or sulfur-containing compounds. Lytic polysaccharide monooxygenase (LPMO) that depolymerizes crystalline and amorphous polysaccharides via the oxidation of scissile alpha- or beta-(1-4)-glycosidic bonds, yielding C4 oxidation products. Catalysis by LPMOs requires the reduction of the active-site copper from Cu(II) to Cu(I) by a reducing agent and H(2)O(2) or O(2) as a cosubstrate. Shows oxidative cleavage of beta-(1-3, 1-4)-glucan from oat spelt or xyloglucan from tamarind seed, in addition to cellulose. In Thermothelomyces thermophilus (strain ATCC 42464 / BCRC 31852 / DSM 1799) (Sporotrichum thermophile), this protein is AA9 family lytic polysaccharide monooxygenase C.